Here is a 70-residue protein sequence, read N- to C-terminus: Large ribosomal subunit protein bL31c (70 aa).

This sequence belongs to the bacterial ribosomal protein bL31 family. Type A subfamily. Part of the 50S ribosomal subunit.

It is found in the plastid. The protein resides in the chloroplast. In terms of biological role, binds the 23S rRNA. This is Large ribosomal subunit protein bL31c from Emiliania huxleyi (Coccolithophore).